Here is a 215-residue protein sequence, read N- to C-terminus: GTP-binding nuclear protein Ran (215 aa).

The Small GTPase Ran-type domain occupies 6 to 170 (DIPTFKLVLV…LWLARKLLGD (165 aa)). Residues 17–24 (DGGTGKTT), 35–41 (EKKYVAT), Gly-67, 121–124 (NKVD), and 149–151 (SAK) contribute to the GTP site. Positions 36 to 44 (KKYVATLGV) are switch-I. Positions 67–83 (GQEKFGGLRDGYYIQGQ) are switch-II.

This sequence belongs to the small GTPase superfamily. Ran family. As to quaternary structure, found in a nuclear export complex with RanGTP, exportin and pre-miRNA.

Its subcellular location is the nucleus. Functionally, GTP-binding protein involved in nucleocytoplasmic transport. Required for the import of protein into the nucleus and also for RNA export. Involved in chromatin condensation and control of cell cycle. In Brugia malayi (Filarial nematode worm), this protein is GTP-binding nuclear protein Ran.